Reading from the N-terminus, the 767-residue chain is Phosphoribosylformylglycinamidine synthase subunit PurL (767 aa).

The active site involves His-46. Residues Tyr-49 and Lys-88 each contribute to the ATP site. Glu-90 serves as a coordination point for Mg(2+). Residues 91–94 (SHNH) and Arg-113 each bind substrate. His-92 (proton acceptor) is an active-site residue. Asp-114 lines the Mg(2+) pocket. Position 237 (Gln-237) interacts with substrate. Asp-265 is a Mg(2+) binding site. Residue 309 to 311 (ESQ) participates in substrate binding. 2 residues coordinate ATP: Asp-498 and Gly-535. Residue Asn-536 participates in Mg(2+) binding. Ser-538 is a binding site for substrate.

This sequence belongs to the FGAMS family. As to quaternary structure, monomer. Part of the FGAM synthase complex composed of 1 PurL, 1 PurQ and 2 PurS subunits.

Its subcellular location is the cytoplasm. The catalysed reaction is N(2)-formyl-N(1)-(5-phospho-beta-D-ribosyl)glycinamide + L-glutamine + ATP + H2O = 2-formamido-N(1)-(5-O-phospho-beta-D-ribosyl)acetamidine + L-glutamate + ADP + phosphate + H(+). Its pathway is purine metabolism; IMP biosynthesis via de novo pathway; 5-amino-1-(5-phospho-D-ribosyl)imidazole from N(2)-formyl-N(1)-(5-phospho-D-ribosyl)glycinamide: step 1/2. Part of the phosphoribosylformylglycinamidine synthase complex involved in the purines biosynthetic pathway. Catalyzes the ATP-dependent conversion of formylglycinamide ribonucleotide (FGAR) and glutamine to yield formylglycinamidine ribonucleotide (FGAM) and glutamate. The FGAM synthase complex is composed of three subunits. PurQ produces an ammonia molecule by converting glutamine to glutamate. PurL transfers the ammonia molecule to FGAR to form FGAM in an ATP-dependent manner. PurS interacts with PurQ and PurL and is thought to assist in the transfer of the ammonia molecule from PurQ to PurL. The chain is Phosphoribosylformylglycinamidine synthase subunit PurL from Anaeromyxobacter sp. (strain Fw109-5).